Here is a 192-residue protein sequence, read N- to C-terminus: GTP cyclohydrolase 1 (192 aa).

Zn(2+) is bound by residues Cys76, His79, and Cys148.

The protein belongs to the GTP cyclohydrolase I family. As to quaternary structure, toroid-shaped homodecamer, composed of two pentamers of five dimers.

It catalyses the reaction GTP + H2O = 7,8-dihydroneopterin 3'-triphosphate + formate + H(+). The protein operates within cofactor biosynthesis; 7,8-dihydroneopterin triphosphate biosynthesis; 7,8-dihydroneopterin triphosphate from GTP: step 1/1. The protein is GTP cyclohydrolase 1 of Carboxydothermus hydrogenoformans (strain ATCC BAA-161 / DSM 6008 / Z-2901).